The chain runs to 107 residues: UPF0145 protein ECA2666 (107 aa).

It belongs to the UPF0145 family.

The chain is UPF0145 protein ECA2666 from Pectobacterium atrosepticum (strain SCRI 1043 / ATCC BAA-672) (Erwinia carotovora subsp. atroseptica).